Reading from the N-terminus, the 243-residue chain is 1-(5-phosphoribosyl)-5-[(5-phosphoribosylamino)methylideneamino] imidazole-4-carboxamide isomerase (243 aa).

Asp-8 (proton acceptor) is an active-site residue. Asp-129 serves as the catalytic Proton donor.

This sequence belongs to the HisA/HisF family.

The protein resides in the cytoplasm. It catalyses the reaction 1-(5-phospho-beta-D-ribosyl)-5-[(5-phospho-beta-D-ribosylamino)methylideneamino]imidazole-4-carboxamide = 5-[(5-phospho-1-deoxy-D-ribulos-1-ylimino)methylamino]-1-(5-phospho-beta-D-ribosyl)imidazole-4-carboxamide. Its pathway is amino-acid biosynthesis; L-histidine biosynthesis; L-histidine from 5-phospho-alpha-D-ribose 1-diphosphate: step 4/9. This chain is 1-(5-phosphoribosyl)-5-[(5-phosphoribosylamino)methylideneamino] imidazole-4-carboxamide isomerase, found in Brucella anthropi (strain ATCC 49188 / DSM 6882 / CCUG 24695 / JCM 21032 / LMG 3331 / NBRC 15819 / NCTC 12168 / Alc 37) (Ochrobactrum anthropi).